The chain runs to 365 residues: Protein RecA (365 aa).

69–76 (GPESSGKT) is a binding site for ATP. The segment at 344–365 (LDDNPDTDDHDVEDIDENTDEE) is disordered. Acidic residues predominate over residues 347–365 (NPDTDDHDVEDIDENTDEE).

The protein belongs to the RecA family.

The protein resides in the cytoplasm. Its function is as follows. Can catalyze the hydrolysis of ATP in the presence of single-stranded DNA, the ATP-dependent uptake of single-stranded DNA by duplex DNA, and the ATP-dependent hybridization of homologous single-stranded DNAs. It interacts with LexA causing its activation and leading to its autocatalytic cleavage. The chain is Protein RecA from Arthrospira platensis (Spirulina platensis).